Here is a 318-residue protein sequence, read N- to C-terminus: MDQNNSLPPYAQGLASPQGAMTPGIPIFSPMMPYGTGLTPQPIQNTNSLSILEEQQREQQQQQQQQQQQQQQAVATAAASVQQSTSQQSTQGASGQTPQLFHSQTLTTAPLPGTTPLYPSPMTPMTPITPATPASESSGIVPQLQNIVSTVNLGCKLDLKTIALRARNAEYNPKRFAAVIMRIREPRTTALIFSSGKMVCTGAKSEEQSRLAARKYARVVQKLGFPAKFLDFKIQNMVGSCDVKFPIRLEGLVLTHQQFSSYEPELFPGLIYRMIKPRIVLLIFVSGKVVLTGAKVRAEIYEAFENIYPILKGFRKTT.

2 disordered regions span residues 1 to 21 (MDQNNSLPPYAQGLASPQGAM) and 106 to 138 (LTTAPLPGTTPLYPSPMTPMTPITPATPASESS). 2 stretches are compositionally biased toward low complexity: residues 106 to 117 (LTTAPLPGTTPL) and 125 to 135 (MTPITPATPAS). 2 consecutive repeat copies span residues 144-220 (LQNI…ARVV) and 234-311 (IQNM…YPIL). Positions 146, 182, 197, 236, and 273 each coordinate DNA.

Belongs to the TBP family. Binds DNA as monomer. Belongs to the TFIID complex together with the TBP-associated factors (TAFs). Part of a TFIID-containing RNA polymerase II pre-initiation complex that is composed of TBP and at least GTF2A1, GTF2A2, GTF2E1, GTF2E2, GTF2F1, GTF2H2, GTF2H3, GTF2H4, GTF2H5, GTF2B, TCEA1, ERCC2, ERCC3, TAF1, TAF2, TAF3, TAF4, TAF5, TAF6, TAF7, TAF8, TAF9, TAF10, TAF11, TAF12 and TAF13. Component of the transcription factor SL1/TIF-IB complex, composed of TBP and at least TAF1A, TAF1B, TAF1C and TAF1D. Association of TBP to form either TFIID or SL1/TIF-IB appears to be mutually exclusive. Interacts with TAF1A, TAF1B and TAF1C. Interacts with TFIIB, NCOA6, DRAP1, DR1 and ELF3. Interacts with SPIB, SNAPC1, SNAPC2 and SNAPC4. Interacts with UTF1. Interacts with BRF2; this interaction promotes recruitment of BRF2 to TATA box-containing promoters. Interacts with UBTF. Interacts with GPBP1. Interacts with CITED2. Interacts with ATF7IP. Interacts with LLPH. Interacts with HSF1 (via transactivation domain). Interacts with GTF2B (via C-terminus); this interaction with promoter-bound TBP guides RNA polymerase II into the pre-initiation complex (PIC). Interacts with PAX5. Interacts with MSX1; the interaction may inhibit MSX1 autoinactivation. Interacts with MSX3.

The protein localises to the nucleus. Its function is as follows. General transcription factor that functions at the core of the DNA-binding multiprotein factor TFIID. Binding of TFIID to the TATA box is the initial transcriptional step of the pre-initiation complex (PIC), playing a role in the activation of eukaryotic genes transcribed by RNA polymerase II. Component of a BRF2-containing transcription factor complex that regulates transcription mediated by RNA polymerase III. Component of the transcription factor SL1/TIF-IB complex, which is involved in the assembly of the PIC (pre-initiation complex) during RNA polymerase I-dependent transcription. The rate of PIC formation probably is primarily dependent on the rate of association of SL1 with the rDNA promoter. SL1 is involved in stabilization of nucleolar transcription factor 1/UBTF on rDNA. The protein is TATA-box-binding protein (TBP) of Mesocricetus auratus (Golden hamster).